A 340-amino-acid chain; its full sequence is TATA-box-binding protein (340 aa).

The interval 1 to 78 (MNLNSPAVSM…HSLQGSSMQM (78 aa)) is disordered. Residues 57-68 (PQSIQPMQSQQM) show a composition bias toward low complexity. Over residues 69–78 (HSLQGSSMQM) the composition is skewed to polar residues. 2 tandem repeats follow at residues 168–244 (LQNI…ARIV) and 258–335 (VQNM…YPIL).

The protein belongs to the TBP family. As to quaternary structure, component of the TFIID basal transcription factor complex, composed of TATA-box-binding protein tbp-1, and a number of TBP-associated factors (TAFs). Binds DNA as monomer.

The protein resides in the nucleus. In terms of biological role, the TFIID basal transcription factor complex plays a major role in the initiation of RNA polymerase II (Pol II)-dependent transcription. TFIID recognizes and binds promoters via its subunit tbp-1, a TATA-box-binding protein, and promotes assembly of the pre-initiation complex (PIC). The TFIID complex consists of tbp-1 and TBP-associated factors (TAFs). General transcription factor that functions at the core of the TFIID complex. The polypeptide is TATA-box-binding protein (tbp-1) (Caenorhabditis elegans).